The following is a 379-amino-acid chain: Lipid-A-disaccharide synthase (379 aa).

It belongs to the LpxB family.

The enzyme catalyses a lipid X + a UDP-2-N,3-O-bis[(3R)-3-hydroxyacyl]-alpha-D-glucosamine = a lipid A disaccharide + UDP + H(+). Its pathway is bacterial outer membrane biogenesis; LPS lipid A biosynthesis. Condensation of UDP-2,3-diacylglucosamine and 2,3-diacylglucosamine-1-phosphate to form lipid A disaccharide, a precursor of lipid A, a phosphorylated glycolipid that anchors the lipopolysaccharide to the outer membrane of the cell. This chain is Lipid-A-disaccharide synthase, found in Persephonella marina (strain DSM 14350 / EX-H1).